The chain runs to 477 residues: Bile acid transporter (477 aa).

Transmembrane regions (helical) follow at residues 13 to 33 (FVPF…TAVL), 50 to 70 (WISL…GKLG), 83 to 103 (IVIF…IFML), 107 to 127 (FIVG…IVTE), 139 to 159 (LYML…GLIM), 166 to 186 (VMMW…TFSI), 206 to 226 (LVVV…NIGW), 228 to 248 (STAF…LVMV), 272 to 292 (LILF…IVFV), 301 to 321 (IISS…SVII), 333 to 353 (VLTF…LFKA), 359 to 379 (IFAA…TIFM), 381 to 401 (VALS…YGLF), 406 to 426 (APFG…ANIA), and 444 to 464 (ISSI…GIIL).

The protein belongs to the major facilitator superfamily.

It localises to the cell membrane. The protein operates within lipid metabolism; bile acid degradation. In Clostridium scindens (strain JCM 10418 / VPI 12708), this protein is Bile acid transporter (baiG).